Here is a 385-residue protein sequence, read N- to C-terminus: S-adenosylmethionine synthase (385 aa).

Histidine 16 contributes to the ATP binding site. Residue aspartate 18 coordinates Mg(2+). Glutamate 44 lines the K(+) pocket. L-methionine-binding residues include glutamate 57 and glutamine 100. The tract at residues 100-110 (QSPDINQGVDK) is flexible loop. ATP-binding positions include 165 to 167 (DAK), 231 to 232 (RF), aspartate 240, 246 to 247 (RK), alanine 263, and lysine 267. An L-methionine-binding site is contributed by aspartate 240. Lysine 271 is an L-methionine binding site.

It belongs to the AdoMet synthase family. In terms of assembly, homotetramer; dimer of dimers. It depends on Mg(2+) as a cofactor. K(+) serves as cofactor.

It is found in the cytoplasm. It catalyses the reaction L-methionine + ATP + H2O = S-adenosyl-L-methionine + phosphate + diphosphate. It functions in the pathway amino-acid biosynthesis; S-adenosyl-L-methionine biosynthesis; S-adenosyl-L-methionine from L-methionine: step 1/1. Its function is as follows. Catalyzes the formation of S-adenosylmethionine (AdoMet) from methionine and ATP. The overall synthetic reaction is composed of two sequential steps, AdoMet formation and the subsequent tripolyphosphate hydrolysis which occurs prior to release of AdoMet from the enzyme. The protein is S-adenosylmethionine synthase of Vibrio cholerae serotype O1 (strain ATCC 39315 / El Tor Inaba N16961).